Reading from the N-terminus, the 697-residue chain is Pentatricopeptide repeat-containing protein At5g46460, mitochondrial (697 aa).

Residues 1–36 (MWSRAIFQRFRFRAFSISHVIHGKCYRSFSVTVEFQ) constitute a mitochondrion transit peptide. PPR repeat units follow at residues 39–64 (EVLI…VPSP), 65–95 (HVSL…MPVR), 96–130 (DVVS…SVVS), 131–157 (WTAM…MPVK), 158–192 (DTAA…NVIS), 193–223 (WTTM…CIKS), 224–258 (TSRP…GFLY), 259–289 (EEYV…KVHE), 290–324 (QVAV…SILP), 325–359 (NQST…GLET), 360–390 (DAFV…IFKK), 391–425 (SIVS…NKEP), 426–456 (DEIT…MSSG), and 463–497 (KIQH…PNEM). The type E motif stretch occupies residues 498–573 (VWLALLSACR…KPGSSWVVIR (76 aa)). The segment at 574 to 602 (GKKHEFFSGDQPHCSRIYEKLEFLREKLK) is type E(+) motif. Residues 603–697 (ELGYAPDYRS…NGTCSCGDYW (95 aa)) form a type DYW motif region.

This sequence belongs to the PPR family. PCMP-H subfamily.

It localises to the mitochondrion. This chain is Pentatricopeptide repeat-containing protein At5g46460, mitochondrial (PCMP-H49), found in Arabidopsis thaliana (Mouse-ear cress).